A 686-amino-acid polypeptide reads, in one-letter code: Putative xyloglucan glycosyltransferase 10 (686 aa).

2 helical membrane passes run 114 to 134 (LYAF…VELA) and 160 to 180 (AAYV…LFLV). Residue Asp-267 is part of the active site. Residues Asp-326 and Asp-328 each contribute to the substrate site. Asp-420 is a catalytic residue. Helical transmembrane passes span 498-518 (LILP…TMFI), 523-543 (LPDW…ILPA), 640-656 (ELAL…RSLL), and 661-681 (IHFY…LDLI).

This sequence belongs to the glycosyltransferase 2 family. Plant cellulose synthase-like C subfamily.

Its subcellular location is the golgi apparatus membrane. Probable beta-1,4-glucan synthase rather involved in the synthesis of the xyloglucan backbone than cellulose. Seems to work simultaneously with xyloglucan 6-xylosyltransferase. Xyloglucan is a noncellulosic polysaccharides of plant cell wall and consists of a glucan backbone substituted by xylose, galactose and fucose. This is Putative xyloglucan glycosyltransferase 10 (CSLC10) from Oryza sativa subsp. indica (Rice).